Reading from the N-terminus, the 108-residue chain is uncharacterized protein (108 aa).

Residues 1 to 10 (MSGISLTPVK) show a composition bias toward polar residues. 2 disordered regions span residues 1 to 63 (MSGI…RPPR) and 83 to 108 (VLSPRYDLSDEPHAPGTTMISGPRTQ). Over residues 33–62 (YVDRARPSADAKEHCAASDPEEWHSGDRPP) the composition is skewed to basic and acidic residues.

This is an uncharacterized protein from Gallid herpesvirus 2 (strain Chicken/Md5/ATCC VR-987) (GaHV-2).